We begin with the raw amino-acid sequence, 236 residues long: Cutinase (236 aa).

Positions 1-20 are cleaved as a signal peptide; the sequence is MSLTLFSFLSLVSILCIVTA. C66 and C143 form a disulfide bridge. The active-site Nucleophile is S154. The cysteines at positions 202 and 209 are disulfide-linked. D206 is a catalytic residue. H218 (proton donor/acceptor) is an active-site residue.

This sequence belongs to the cutinase family. The 2 disulfide bonds play a critical role in holding the catalytic residues in juxta-position; reduction of the disulfide bridges results in the complete inactivation of the enzyme.

It is found in the secreted. The catalysed reaction is cutin + H2O = cutin monomers.. Catalyzes the hydrolysis of complex carboxylic polyesters found in the cell wall of plants. Degrades cutin, a macromolecule that forms the structure of the plant cuticle. Allows pathogenic fungi to penetrate through the cuticular barrier into the host plant during the initial stage of fungal infection. The protein is Cutinase (CUT1) of Blumeria hordei (Barley powdery mildew).